We begin with the raw amino-acid sequence, 325 residues long: L-lactate dehydrogenase 1 (325 aa).

NAD(+) is bound by residues Val17, Asp38, Lys43, Tyr68, and 82-83 (GA). Residues Gln85, Arg91, and 123-126 (NPVD) contribute to the substrate site. Residues 121-123 (AAN) and Ser146 contribute to the NAD(+) site. 151-154 (DTAR) is a substrate binding site. 2 residues coordinate beta-D-fructose 1,6-bisphosphate: Arg156 and His171. The Proton acceptor role is filled by His178. Tyr223 carries the post-translational modification Phosphotyrosine. Position 232 (Thr232) interacts with substrate.

It belongs to the LDH/MDH superfamily. LDH family. As to quaternary structure, homotetramer.

The protein localises to the cytoplasm. It carries out the reaction (S)-lactate + NAD(+) = pyruvate + NADH + H(+). The protein operates within fermentation; pyruvate fermentation to lactate; (S)-lactate from pyruvate: step 1/1. Its activity is regulated as follows. Allosterically activated by fructose 1,6-bisphosphate (FBP). In terms of biological role, catalyzes the conversion of lactate to pyruvate. The polypeptide is L-lactate dehydrogenase 1 (Lactococcus lactis subsp. cremoris (Streptococcus cremoris)).